The primary structure comprises 100 residues: Large ribosomal subunit protein bL28 (100 aa).

Belongs to the bacterial ribosomal protein bL28 family.

The sequence is that of Large ribosomal subunit protein bL28 from Ehrlichia ruminantium (strain Gardel).